The chain runs to 391 residues: Pyruvate dehydrogenase E1 component subunit beta-3, chloroplastic (391 aa).

A chloroplast-targeting transit peptide spans 1-35; it reads MATAAAASLQYALHGAASASAKPRSAAPGRSVRVV. E127 contributes to the thiamine diphosphate binding site. K(+) contacts are provided by I180, A228, I229, and N233.

In terms of assembly, tetramer of 2 alpha and 2 beta subunits. Thiamine diphosphate serves as cofactor.

Its subcellular location is the plastid. It localises to the chloroplast. The catalysed reaction is N(6)-[(R)-lipoyl]-L-lysyl-[protein] + pyruvate + H(+) = N(6)-[(R)-S(8)-acetyldihydrolipoyl]-L-lysyl-[protein] + CO2. In terms of biological role, the pyruvate dehydrogenase complex catalyzes the overall conversion of pyruvate to acetyl-CoA and CO(2). It contains multiple copies of three enzymatic components: pyruvate dehydrogenase (E1), dihydrolipoamide acetyltransferase (E2) and lipoamide dehydrogenase (E3). The chain is Pyruvate dehydrogenase E1 component subunit beta-3, chloroplastic from Oryza sativa subsp. japonica (Rice).